The following is a 151-amino-acid chain: NADH dehydrogenase [ubiquinone] 1 beta subcomplex subunit 11, mitochondrial (151 aa).

Residues 1 to 29 (MAARLLSLYGRCLSAAGAMRGLPAARVRW) constitute a mitochondrion transit peptide. Residues 40–62 (GVEKKRQREPTMQWQEDPEPEDE) form a disordered region. A helical membrane pass occupies residues 87–107 (AVFFFGFSIVLVFGTTFVAYV).

It belongs to the complex I NDUFB11 subunit family. In terms of assembly, complex I is composed of 45 different subunits. Interacts with BCAP31.

Its subcellular location is the mitochondrion inner membrane. In terms of biological role, accessory subunit of the mitochondrial membrane respiratory chain NADH dehydrogenase (Complex I), that is believed not to be involved in catalysis. Complex I functions in the transfer of electrons from NADH to the respiratory chain. The immediate electron acceptor for the enzyme is believed to be ubiquinone. This Mus musculus (Mouse) protein is NADH dehydrogenase [ubiquinone] 1 beta subcomplex subunit 11, mitochondrial (Ndufb11).